The primary structure comprises 728 residues: Catalase-peroxidase (728 aa).

Positions 1–19 are cleaved as a signal peptide; sequence MSTEAKCPVTGGATRSSSA. The segment at 1–20 is disordered; that stretch reads MSTEAKCPVTGGATRSSSAG. Positions 96-219 form a cross-link, tryptophyl-tyrosyl-methioninium (Trp-Tyr) (with M-245); that stretch reads WHAAGTYRIG…LAAVQMGLIY (124 aa). Catalysis depends on H97, which acts as the Proton acceptor. Positions 219–245 form a cross-link, tryptophyl-tyrosyl-methioninium (Tyr-Met) (with W-96); the sequence is YVNPEGPNGKPDPVAAARDIRETFARM. Heme b is bound at residue H260.

Belongs to the peroxidase family. Peroxidase/catalase subfamily. As to quaternary structure, homodimer or homotetramer. Heme b is required as a cofactor. In terms of processing, formation of the three residue Trp-Tyr-Met cross-link is important for the catalase, but not the peroxidase activity of the enzyme.

The catalysed reaction is H2O2 + AH2 = A + 2 H2O. It carries out the reaction 2 H2O2 = O2 + 2 H2O. Functionally, bifunctional enzyme with both catalase and broad-spectrum peroxidase activity. The protein is Catalase-peroxidase of Acidiphilium cryptum (strain JF-5).